Consider the following 86-residue polypeptide: MAKGQSLQDPFLNALRRERIPVSIYLVNGIKLQGQIESFDQFVILLKNTVNQMVYKHAISTVVPARPVSHHSGERGSDRPSEKSED.

In terms of domain architecture, Sm spans 9–68 (DPFLNALRRERIPVSIYLVNGIKLQGQIESFDQFVILLKNTVNQMVYKHAISTVVPARPV). The tract at residues 65–86 (ARPVSHHSGERGSDRPSEKSED) is disordered. Basic and acidic residues predominate over residues 71 to 86 (HSGERGSDRPSEKSED).

It belongs to the Hfq family. As to quaternary structure, homohexamer.

RNA chaperone that binds small regulatory RNA (sRNAs) and mRNAs to facilitate mRNA translational regulation in response to envelope stress, environmental stress and changes in metabolite concentrations. Also binds with high specificity to tRNAs. The polypeptide is RNA-binding protein Hfq (Vibrio vulnificus (strain YJ016)).